A 395-amino-acid polypeptide reads, in one-letter code: ATP phosphoribosyltransferase regulatory subunit (395 aa).

It belongs to the class-II aminoacyl-tRNA synthetase family. HisZ subfamily. Heteromultimer composed of HisG and HisZ subunits.

The protein resides in the cytoplasm. It participates in amino-acid biosynthesis; L-histidine biosynthesis; L-histidine from 5-phospho-alpha-D-ribose 1-diphosphate: step 1/9. In terms of biological role, required for the first step of histidine biosynthesis. May allow the feedback regulation of ATP phosphoribosyltransferase activity by histidine. The protein is ATP phosphoribosyltransferase regulatory subunit of Pseudomonas syringae pv. tomato (strain ATCC BAA-871 / DC3000).